The chain runs to 146 residues: Ecotin-like protein 1 (146 aa).

Belongs to the protease inhibitor I11 (ecotin) family.

The chain is Ecotin-like protein 1 (ISP1) from Leishmania braziliensis.